The following is a 536-amino-acid chain: Xylulose kinase (536 aa).

Histidine 99, arginine 170, aspartate 280, and asparagine 281 together coordinate substrate. Residues tryptophan 355, 441–442 (GA), and asparagine 445 each bind ATP.

The protein belongs to the FGGY kinase family. In terms of assembly, monomer.

It carries out the reaction D-xylulose + ATP = D-xylulose 5-phosphate + ADP + H(+). Functionally, phosphorylates D-xylulose to produce D-xylulose 5-phosphate, a molecule that may play an important role in the regulation of glucose metabolism and lipogenesis. The sequence is that of Xylulose kinase (Xylb) from Rattus norvegicus (Rat).